The sequence spans 557 residues: Proline--tRNA ligase (557 aa).

The protein belongs to the class-II aminoacyl-tRNA synthetase family. ProS type 1 subfamily. Homodimer.

It is found in the cytoplasm. The catalysed reaction is tRNA(Pro) + L-proline + ATP = L-prolyl-tRNA(Pro) + AMP + diphosphate. Catalyzes the attachment of proline to tRNA(Pro) in a two-step reaction: proline is first activated by ATP to form Pro-AMP and then transferred to the acceptor end of tRNA(Pro). As ProRS can inadvertently accommodate and process non-cognate amino acids such as alanine and cysteine, to avoid such errors it has two additional distinct editing activities against alanine. One activity is designated as 'pretransfer' editing and involves the tRNA(Pro)-independent hydrolysis of activated Ala-AMP. The other activity is designated 'posttransfer' editing and involves deacylation of mischarged Ala-tRNA(Pro). The misacylated Cys-tRNA(Pro) is not edited by ProRS. In Baumannia cicadellinicola subsp. Homalodisca coagulata, this protein is Proline--tRNA ligase.